A 63-amino-acid chain; its full sequence is UPF0391 membrane protein lpg2415 (63 aa).

2 helical membrane passes run 4-24 (WALI…RGVA) and 33-53 (VLFF…LLGG).

The protein belongs to the UPF0391 family.

Its subcellular location is the cell membrane. This chain is UPF0391 membrane protein lpg2415, found in Legionella pneumophila subsp. pneumophila (strain Philadelphia 1 / ATCC 33152 / DSM 7513).